We begin with the raw amino-acid sequence, 175 residues long: ATP synthase subunit b 2 (175 aa).

Residues 20–40 (LIFWTTITFVLVLIILKKIAW) traverse the membrane as a helical segment.

This sequence belongs to the ATPase B chain family. As to quaternary structure, F-type ATPases have 2 components, F(1) - the catalytic core - and F(0) - the membrane proton channel. F(1) has five subunits: alpha(3), beta(3), gamma(1), delta(1), epsilon(1). F(0) has four main subunits: a(1), b(2) and c(10-14). The alpha and beta chains form an alternating ring which encloses part of the gamma chain. F(1) is attached to F(0) by a central stalk formed by the gamma and epsilon chains, while a peripheral stalk is formed by the delta and b chains.

The protein localises to the cell inner membrane. Its function is as follows. F(1)F(0) ATP synthase produces ATP from ADP in the presence of a proton or sodium gradient. F-type ATPases consist of two structural domains, F(1) containing the extramembraneous catalytic core and F(0) containing the membrane proton channel, linked together by a central stalk and a peripheral stalk. During catalysis, ATP synthesis in the catalytic domain of F(1) is coupled via a rotary mechanism of the central stalk subunits to proton translocation. Component of the F(0) channel, it forms part of the peripheral stalk, linking F(1) to F(0). In Chlorobium luteolum (strain DSM 273 / BCRC 81028 / 2530) (Pelodictyon luteolum), this protein is ATP synthase subunit b 2.